We begin with the raw amino-acid sequence, 251 residues long: Hydroxyacylglutathione hydrolase (251 aa).

Residues H53, H55, D57, H58, H110, D127, and H165 each contribute to the Zn(2+) site.

Belongs to the metallo-beta-lactamase superfamily. Glyoxalase II family. As to quaternary structure, monomer. It depends on Zn(2+) as a cofactor.

The enzyme catalyses an S-(2-hydroxyacyl)glutathione + H2O = a 2-hydroxy carboxylate + glutathione + H(+). It participates in secondary metabolite metabolism; methylglyoxal degradation; (R)-lactate from methylglyoxal: step 2/2. Functionally, thiolesterase that catalyzes the hydrolysis of S-D-lactoyl-glutathione to form glutathione and D-lactic acid. In Escherichia coli O81 (strain ED1a), this protein is Hydroxyacylglutathione hydrolase.